Here is a 1451-residue protein sequence, read N- to C-terminus: ARF guanine-nucleotide exchange factor GNOM (1451 aa).

Positions 1 to 246 (MGRLKLHSGI…VNRAGSIKQE (246 aa)) are DCB domain. Residues 557–752 (RRKYIKRRLM…NEIRTTPEQG (196 aa)) enclose the SEC7 domain. The active site involves Glu658. Residues 1430–1451 (SQLGDDETVSNGLSSPENTTGS) are disordered.

In terms of assembly, homodimer. Interacts with CYP19-4/CYP5 in vitro. Stems, leaves, flowers, siliques, floral inflorescence and roots. Expressed in the whole plant (at the protein level).

The protein localises to the cytoplasm. Its subcellular location is the cytosol. The protein resides in the endosome membrane. It is found in the cell membrane. With respect to regulation, inhibited by brefeldin A (BFA). Functionally, activates the ARF proteins by exchanging bound GDP for free GTP. Plays a role in vesicular protein sorting. Acts as the major regulator of endosomal vesicle trafficking but is also involved in the endocytosis process. Could function redundantly with GNL1 in the retrograde Golgi to endoplasmic reticulum trafficking. Regulates vesicle trafficking required for the coordinated polar localization of auxin efflux carriers which in turn determines the direction of auxin flow. Mediates the sorting of PIN1 from endosomal compartments to the basal plasma membrane and the polarization of PIN3 to the bottom side of hypocotyl endodermal cells. Involved in the specification of apical-basal pattern formation in the early embryo and during root formation. Required for correct cell wall organization leading to normal cell adhesion during seedling development. Also plays an essential role in hydrotropism of seedling roots. This Arabidopsis thaliana (Mouse-ear cress) protein is ARF guanine-nucleotide exchange factor GNOM (GN).